The sequence spans 160 residues: Fimbrial protein (160 aa).

A propeptide spans 1 to 7 (MKSLQKG) (leader sequence). At phenylalanine 8 the chain carries N-methylphenylalanine. A helical membrane pass occupies residues 8 to 28 (FTLIELMIVVAIIGILAAFAI).

Belongs to the N-Me-Phe pilin family. In terms of assembly, the pili are polar flexible filaments of about 5.4 nanometers diameter and 2.5 micrometers average length; they consist of only a single polypeptide chain arranged in a helical configuration of five subunits per turn in the assembled pilus.

It is found in the fimbrium. It localises to the membrane. The polypeptide is Fimbrial protein (fimA) (Dichelobacter nodosus (Bacteroides nodosus)).